Reading from the N-terminus, the 397-residue chain is Putative teichuronic acid biosynthesis glycosyltransferase TuaH (397 aa).

Belongs to the glycosyltransferase group 1 family.

Its pathway is cell wall biogenesis; teichuronic acid biosynthesis. The sequence is that of Putative teichuronic acid biosynthesis glycosyltransferase TuaH (tuaH) from Bacillus subtilis (strain 168).